Reading from the N-terminus, the 408-residue chain is Peptidase T (408 aa).

Histidine 78 serves as a coordination point for Zn(2+). Residue aspartate 80 is part of the active site. Aspartate 141 serves as a coordination point for Zn(2+). Glutamate 175 functions as the Proton acceptor in the catalytic mechanism. The Zn(2+) site is built by glutamate 176, aspartate 198, and histidine 380.

This sequence belongs to the peptidase M20B family. Requires Zn(2+) as cofactor.

It is found in the cytoplasm. The catalysed reaction is Release of the N-terminal residue from a tripeptide.. Its function is as follows. Cleaves the N-terminal amino acid of tripeptides. The polypeptide is Peptidase T (Clostridium botulinum (strain ATCC 19397 / Type A)).